We begin with the raw amino-acid sequence, 1104 residues long: Receptor-type guanylate cyclase gcy-15 (1104 aa).

At 1 to 431 (MEIAINRLNA…ENCGPPANNT (431 aa)) the chain is on the extracellular side. N-linked (GlcNAc...) asparagine glycans are attached at residues N43, N237, N263, N287, N407, and N429. Residues 432-452 (FIIVISVGVAVLIGLAIAAAF) form a helical membrane-spanning segment. The Cytoplasmic portion of the chain corresponds to 453-1104 (LYKRYRYERR…QIQEKTYEFS (652 aa)). One can recognise a Protein kinase domain in the interval 528–823 (FNTGSTARAG…QIKRKLKPLT (296 aa)). ATP contacts are provided by residues 534 to 542 (ARAGPFGPI) and K576. The stretch at 838 to 871 (IEKYTDKLEKDIAERNEELEAEKAKSEALLKMML) forms a coiled coil. The Guanylate cyclase domain occupies 894–1024 (TVFFSDCPGF…DTVNTASRME (131 aa)).

The protein belongs to the adenylyl cyclase class-4/guanylyl cyclase family. As to expression, expressed bilaterally in ASG sensory neurons.

The protein localises to the cell membrane. The catalysed reaction is GTP = 3',5'-cyclic GMP + diphosphate. Its function is as follows. Guanylate cyclase involved in the production of the second messenger cGMP. The protein is Receptor-type guanylate cyclase gcy-15 of Caenorhabditis elegans.